The primary structure comprises 761 residues: Phosphoribosylformylglycinamidine synthase subunit PurL (761 aa).

The active site involves His49. ATP-binding residues include Tyr52 and Lys92. Residue Glu94 participates in Mg(2+) binding. Substrate contacts are provided by residues 95–98 (SHNH) and Arg117. Catalysis depends on His96, which acts as the Proton acceptor. Asp118 contributes to the Mg(2+) binding site. Substrate is bound at residue Gln241. Asp269 provides a ligand contact to Mg(2+). 318 to 320 (ESQ) is a substrate binding site. Residues Asn502 and Gly539 each contribute to the ATP site. Mg(2+) is bound at residue Asn540. Ser542 provides a ligand contact to substrate.

The protein belongs to the FGAMS family. In terms of assembly, monomer. Part of the FGAM synthase complex composed of 1 PurL, 1 PurQ and 2 PurS subunits.

It is found in the cytoplasm. The catalysed reaction is N(2)-formyl-N(1)-(5-phospho-beta-D-ribosyl)glycinamide + L-glutamine + ATP + H2O = 2-formamido-N(1)-(5-O-phospho-beta-D-ribosyl)acetamidine + L-glutamate + ADP + phosphate + H(+). It participates in purine metabolism; IMP biosynthesis via de novo pathway; 5-amino-1-(5-phospho-D-ribosyl)imidazole from N(2)-formyl-N(1)-(5-phospho-D-ribosyl)glycinamide: step 1/2. In terms of biological role, part of the phosphoribosylformylglycinamidine synthase complex involved in the purines biosynthetic pathway. Catalyzes the ATP-dependent conversion of formylglycinamide ribonucleotide (FGAR) and glutamine to yield formylglycinamidine ribonucleotide (FGAM) and glutamate. The FGAM synthase complex is composed of three subunits. PurQ produces an ammonia molecule by converting glutamine to glutamate. PurL transfers the ammonia molecule to FGAR to form FGAM in an ATP-dependent manner. PurS interacts with PurQ and PurL and is thought to assist in the transfer of the ammonia molecule from PurQ to PurL. The chain is Phosphoribosylformylglycinamidine synthase subunit PurL from Chlorobium chlorochromatii (strain CaD3).